A 62-amino-acid chain; its full sequence is Disintegrin schistatin-like subunit A (62 aa).

Residues 1–62 form the Disintegrin domain; sequence SVNPCCDPVI…TTDCPRNRYN (62 aa). Cystine bridges form between C5–C28, C19–C25, C24–C49, and C37–C56. The Cell attachment site signature appears at 41–43; it reads RGD.

It belongs to the disintegrin family. Dimeric disintegrin subfamily. Heterodimer with subunit B; disulfide-linked. In terms of tissue distribution, expressed by the venom gland.

The protein localises to the secreted. May bind to both alpha-IIb/beta-3 (ITGA2B/ITGB3) and alpha-V/beta-3 (ITGAV/ITGB3) integrins, and may inhibit platelet aggregation. The sequence is that of Disintegrin schistatin-like subunit A from Echis carinatus (Saw-scaled viper).